A 287-amino-acid chain; its full sequence is ATP synthase gamma chain (287 aa).

This sequence belongs to the ATPase gamma chain family. In terms of assembly, F-type ATPases have 2 components, CF(1) - the catalytic core - and CF(0) - the membrane proton channel. CF(1) has five subunits: alpha(3), beta(3), gamma(1), delta(1), epsilon(1). CF(0) has three main subunits: a, b and c.

Its subcellular location is the cell inner membrane. Its function is as follows. Produces ATP from ADP in the presence of a proton gradient across the membrane. The gamma chain is believed to be important in regulating ATPase activity and the flow of protons through the CF(0) complex. The protein is ATP synthase gamma chain of Xylella fastidiosa (strain M12).